A 350-amino-acid polypeptide reads, in one-letter code: Putative deoxyribonuclease-2 (350 aa).

The protein belongs to the DNase II family.

This chain is Putative deoxyribonuclease-2, found in Burkholderia thailandensis (strain ATCC 700388 / DSM 13276 / CCUG 48851 / CIP 106301 / E264).